Reading from the N-terminus, the 122-residue chain is Iron-sulfur cluster insertion protein ErpA (122 aa).

Residues Cys50, Cys114, and Cys116 each contribute to the iron-sulfur cluster site.

Belongs to the HesB/IscA family. In terms of assembly, homodimer. It depends on iron-sulfur cluster as a cofactor.

Its function is as follows. Required for insertion of 4Fe-4S clusters for at least IspG. This Alkalilimnicola ehrlichii (strain ATCC BAA-1101 / DSM 17681 / MLHE-1) protein is Iron-sulfur cluster insertion protein ErpA.